The following is a 205-amino-acid chain: Spermatogenesis-associated protein 24 (205 aa).

Residues 17–166 (LALDQLRDVI…QQKQIFRNHM (150 aa)) adopt a coiled-coil conformation. The tract at residues 138–185 (EDILNGKENEIKELQQVISQQKQIFRNHMSDFRIQKQQESYMAQVLDQ) is required for interaction with CBX5 and TBPL1. A disordered region spans residues 180–205 (AQVLDQKHKKASGTRQARSHQHPREK). Residues 186–205 (KHKKASGTRQARSHQHPREK) are compositionally biased toward basic residues.

This sequence belongs to the SPATA24 family. In terms of assembly, homodimer. Interacts with CBX3, CBX5, GMNN, GTF2B, TBPL1 and the polycomb proteins PHCF2, RNF2 and SCMH1 but not with CBX1 or PCGF2.

Its subcellular location is the cytoplasm. The protein localises to the nucleus. It is found in the nucleolus. It localises to the nucleoplasm. Binds DNA with high affinity but does not bind to TATA boxes. Synergises with GMNN and TBP in activation of TATA box-containing promoters and with GMNN and TBPL1 in activation of the NF1 TATA-less promoter. May play a role in cytoplasm movement and removal during spermiogenesis. The chain is Spermatogenesis-associated protein 24 (SPATA24) from Homo sapiens (Human).